Consider the following 137-residue polypeptide: Nucleoside diphosphate kinase (137 aa).

ATP is bound by residues K9, F57, R85, T91, R102, and N112. Residue H115 is the Pros-phosphohistidine intermediate of the active site.

This sequence belongs to the NDK family. In terms of assembly, homotetramer. Mg(2+) serves as cofactor.

The protein resides in the cytoplasm. The catalysed reaction is a 2'-deoxyribonucleoside 5'-diphosphate + ATP = a 2'-deoxyribonucleoside 5'-triphosphate + ADP. The enzyme catalyses a ribonucleoside 5'-diphosphate + ATP = a ribonucleoside 5'-triphosphate + ADP. Its function is as follows. Major role in the synthesis of nucleoside triphosphates other than ATP. The ATP gamma phosphate is transferred to the NDP beta phosphate via a ping-pong mechanism, using a phosphorylated active-site intermediate. This Citrifermentans bemidjiense (strain ATCC BAA-1014 / DSM 16622 / JCM 12645 / Bem) (Geobacter bemidjiensis) protein is Nucleoside diphosphate kinase.